Here is a 317-residue protein sequence, read N- to C-terminus: UV DNA damage endonuclease (317 aa).

Belongs to the uve1/UvsE family.

Component in a DNA repair pathway. Removal of UV LIGHT damaged nucleotides. Recognizes pyrimidine dimers and cleave a phosphodiester bond immediately 5' to the lesion. This is UV DNA damage endonuclease from Bacillus anthracis (strain A0248).